A 2345-amino-acid polypeptide reads, in one-letter code: Nonribisomal peptide synthetase malG (2345 aa).

The tract at residues 226-620 (FSEQAKKNPT…VGRMGTVVKV (395 aa)) is adenylation 1. The Carrier 1 domain occupies 766–839 (TENETLLRLL…EAAGTMISAG (74 aa)). Ser-800 is modified (O-(pantetheine 4'-phosphoryl)serine). Positions 877 to 1292 (EEIYPSTPLQ…LLCPSDKSKL (416 aa)) are condensation 1. The adenylation 2 stretch occupies residues 1317–1707 (VRSERTAVSA…GRKNREVKLR (391 aa)). The region spanning 1843–1926 (QPHESTALFV…DIARLIEGVK (84 aa)) is the Carrier 2 domain. At Ser-1885 the chain carries O-(pantetheine 4'-phosphoryl)serine. The tract at residues 1969–2256 (GMSVFLTGGT…PRQLNALQSE (288 aa)) is reductase (R) domain.

Belongs to the NRP synthetase family.

The enzyme catalyses L-proline + L-tryptophan + 2 ATP + NADPH = (S)-3-(indol-3-ylmethyl)-6,7,8,8a-tetrahydropyrrolo[1,2-a]pyrazin-1-one + 2 AMP + 2 diphosphate + NADP(+) + H2O + H(+). Its function is as follows. Nonribisomal peptide synthetase; part of the gene cluster that mediates the biosynthesis of malbrancheamide, a dichlorinated fungal indole alkaloid that belongs to a family of natural products containing a characteristic bicyclo[2.2.2]diazaoctane core. The first step of malbrancheamide biosynthesis involves coupling of L-proline and L-tryptophan by malG, a bimodular NRPS, to produce L-Pro-L-Trp aldehyde through reductive offloading. This compound undergoes spontaneous cyclization and dehydration to give a dienamine which is reverse prenylated at C-2 by malE. The other prenyltransferase present in the cluster, malB, displays modest activity, suggesting that may be a redundant gene in the pathway. Subsequently, a [4+2] Diels-Alder cyclo-addition catalyzed by the bifunctional enzyme malC forms the characteristic bicyclo[2.2.2]diazaoctane ring of premalbrancheamid. Finally, the flavin-dependent halogenase malA catalyzes the iterative dichlorination of the indole ring of premalbrancheamide to yield C-9 monochlorinated malbrancheamide B, C-8 monochlorinated isomalbrancheamide B, and dichlorinated malbrancheamide. MalA is also able to brominate premalbrancheamide at C-9 to yield malbrancheamide C, and, to a lesser extend, at C-8 to yield isomalbrancheamide C. Finally, malA can brominate C-9 monochlorinated malbrancheamide B at C-8 to yield malbrancheamide D, or C-8 monochlorinated isomalbrancheamide B at C-9 to produce isomalbrancheamide D. This chain is Nonribisomal peptide synthetase malG, found in Malbranchea aurantiaca.